The following is a 341-amino-acid chain: Hyaluronan and proteoglycan link protein 2 (341 aa).

Positions M1 to G27 are cleaved as a signal peptide. Residues P35–T143 enclose the Ig-like V-type domain. 5 disulfides stabilise this stretch: C58/C129, C171/C241, C195/C216, C266/C337, and C291/C312. 2 consecutive Link domains span residues V149–T243 and L246–A339.

This sequence belongs to the HAPLN family. Brain.

It is found in the secreted. Its subcellular location is the extracellular space. It localises to the extracellular matrix. Its function is as follows. Mediates a firm binding of versican V2 to hyaluronic acid. May play a pivotal role in the formation of the hyaluronan-associated matrix in the central nervous system (CNS) which facilitates neuronal conduction and general structural stabilization. Binds to hyaluronic acid. In Rattus norvegicus (Rat), this protein is Hyaluronan and proteoglycan link protein 2 (Hapln2).